The primary structure comprises 109 residues: Synaptobrevin-1 (109 aa).

Positions 1–26 (MDAQGDAGAQGGSQGGPRPSNKRLQQ) are disordered. At 1–86 (MDAQGDAGAQ…KRKYWWKNIK (86 aa)) the chain is on the cytoplasmic side. Positions 23-83 (RLQQTQAQVD…ATLKRKYWWK (61 aa)) constitute a v-SNARE coiled-coil homology domain. A helical; Anchor for type IV membrane protein transmembrane segment spans residues 87 to 107 (MMIIMCAIVVILIIIIVLWAG). At 108 to 109 (GK) the chain is on the extracellular side.

Belongs to the synaptobrevin family. Part of the SNARE core complex containing ric-4/SNAP25, snb-1/VAMP2 and unc-64/STX1A. This complex binds to cpx-1/CPLX1. As to expression, expressed in the nervous system notably the nerve ring, ventral cord and dorsal cord.

It is found in the cytoplasmic vesicle. Its subcellular location is the secretory vesicle. The protein resides in the synaptic vesicle membrane. The protein localises to the cell membrane. It localises to the synapse. It is found in the synaptosome. Functionally, involved in the targeting and/or fusion of transport vesicles to their target membrane. Acts in neuronal exocytosis of synaptic transmission. Likely to have a role in cholinergic transmisson. Required for viability, coordinated movement and M3 pharynx motor neuron function. The polypeptide is Synaptobrevin-1 (Caenorhabditis elegans).